The sequence spans 143 residues: Transcriptional regulator MraZ (143 aa).

SpoVT-AbrB domains are found at residues 5 to 47 and 76 to 119; these read EYEH…TLEE and AVEV…DRAS.

It belongs to the MraZ family. In terms of assembly, forms oligomers.

The protein localises to the cytoplasm. It localises to the nucleoid. In Staphylococcus carnosus (strain TM300), this protein is Transcriptional regulator MraZ.